We begin with the raw amino-acid sequence, 435 residues long: GTPase Obg (435 aa).

In terms of domain architecture, Obg spans 1–158 (MFIDRAKIYV…RWLYLELKLL (158 aa)). Residues 159–328 (ADVGLVGLPN…LLELMEKYVR (170 aa)) form the OBG-type G domain. GTP is bound by residues 165 to 172 (GLPNAGKS), 190 to 194 (FTTKT), 211 to 214 (DIPG), 280 to 283 (NKID), and 309 to 311 (SAK). Mg(2+) contacts are provided by S172 and T192. The region spanning 343 to 426 (IQETKEGRVE…IGDYIFKYNA (84 aa)) is the OCT domain.

Belongs to the TRAFAC class OBG-HflX-like GTPase superfamily. OBG GTPase family. As to quaternary structure, monomer. Requires Mg(2+) as cofactor.

Its subcellular location is the cytoplasm. Functionally, an essential GTPase which binds GTP, GDP and possibly (p)ppGpp with moderate affinity, with high nucleotide exchange rates and a fairly low GTP hydrolysis rate. Plays a role in control of the cell cycle, stress response, ribosome biogenesis and in those bacteria that undergo differentiation, in morphogenesis control. This Dictyoglomus thermophilum (strain ATCC 35947 / DSM 3960 / H-6-12) protein is GTPase Obg.